The chain runs to 214 residues: Probable nicotinate-nucleotide adenylyltransferase (214 aa).

The protein belongs to the NadD family.

The enzyme catalyses nicotinate beta-D-ribonucleotide + ATP + H(+) = deamido-NAD(+) + diphosphate. It functions in the pathway cofactor biosynthesis; NAD(+) biosynthesis; deamido-NAD(+) from nicotinate D-ribonucleotide: step 1/1. Catalyzes the reversible adenylation of nicotinate mononucleotide (NaMN) to nicotinic acid adenine dinucleotide (NaAD). The protein is Probable nicotinate-nucleotide adenylyltransferase of Rubrobacter xylanophilus (strain DSM 9941 / JCM 11954 / NBRC 16129 / PRD-1).